The following is a 172-amino-acid chain: Adenine phosphoribosyltransferase (172 aa).

Belongs to the purine/pyrimidine phosphoribosyltransferase family. In terms of assembly, homodimer.

Its subcellular location is the cytoplasm. The enzyme catalyses AMP + diphosphate = 5-phospho-alpha-D-ribose 1-diphosphate + adenine. It participates in purine metabolism; AMP biosynthesis via salvage pathway; AMP from adenine: step 1/1. In terms of biological role, catalyzes a salvage reaction resulting in the formation of AMP, that is energically less costly than de novo synthesis. The chain is Adenine phosphoribosyltransferase from Synechococcus sp. (strain CC9605).